A 304-amino-acid polypeptide reads, in one-letter code: Sulfate adenylyltransferase subunit 2 1 (304 aa).

The protein belongs to the PAPS reductase family. CysD subfamily. In terms of assembly, heterodimer composed of CysD, the smaller subunit, and CysN.

The enzyme catalyses sulfate + ATP + H(+) = adenosine 5'-phosphosulfate + diphosphate. Its pathway is sulfur metabolism; hydrogen sulfide biosynthesis; sulfite from sulfate: step 1/3. In terms of biological role, with CysN forms the ATP sulfurylase (ATPS) that catalyzes the adenylation of sulfate producing adenosine 5'-phosphosulfate (APS) and diphosphate, the first enzymatic step in sulfur assimilation pathway. APS synthesis involves the formation of a high-energy phosphoric-sulfuric acid anhydride bond driven by GTP hydrolysis by CysN coupled to ATP hydrolysis by CysD. The polypeptide is Sulfate adenylyltransferase subunit 2 1 (Marinobacter nauticus (strain ATCC 700491 / DSM 11845 / VT8) (Marinobacter aquaeolei)).